A 314-amino-acid polypeptide reads, in one-letter code: Zinc transporter ZIP3 (314 aa).

Residues 1-3 (MNL) lie on the Extracellular side of the membrane. A helical transmembrane segment spans residues 4–24 (IFAKVLCLLAILVLMMLGSLI). Residues 25–41 (PVKISEADFDKSSRSRK) lie on the Cytoplasmic side of the membrane. The helical transmembrane segment at 42–62 (ILSLSNSFAGGVFLATCFNAL) threads the bilayer. At 63 to 84 (LPAVREKFFDLLKIGNISTDYP) the chain is on the extracellular side. The helical transmembrane segment at 85 to 105 (LAETIMMVGFFLTVFVEQTVM) threads the bilayer. At 106-169 (TFRKEKPSFI…KELSSSSPIR (64 aa)) the chain is on the cytoplasmic side. Residues 170-190 (LFSLVFALSAHSVFEGLALGL) form a helical membrane-spanning segment. Residues 191-196 (QEDGNK) lie on the Extracellular side of the membrane. The helical transmembrane segment at 197–217 (LLSLFIGVVIHETLVAMALGV) threads the bilayer. Topologically, residues 218–229 (SMAKVNTHLKDA) are cytoplasmic. A helical transmembrane segment spans residues 230–250 (IKMAVLVSTMIPIGIVVGMAI). The Extracellular segment spans residues 251-262 (QSAQNMASSIAS). A helical membrane pass occupies residues 263–283 (ALLQGIAGGTFIFVTFFEILV). Residues 284–292 (KELEEKNDR) lie on the Cytoplasmic side of the membrane. The helical transmembrane segment at 293–313 (LLKVLFLVLGYTVLAVLVLFK) threads the bilayer. Trp314 is a topological domain (extracellular).

This sequence belongs to the ZIP transporter (TC 2.A.5) family.

Its subcellular location is the cell membrane. It localises to the apical cell membrane. The catalysed reaction is Zn(2+)(in) = Zn(2+)(out). Its function is as follows. Transporter for the divalent cation Zn(2+). Mediates the influx of Zn(2+) into cells from extracellular space. In Xenopus tropicalis (Western clawed frog), this protein is Zinc transporter ZIP3 (slc39a3).